Consider the following 140-residue polypeptide: Transmembrane protein 107 (140 aa).

2 helical membrane passes run 7–27 and 53–73; these read LVPS…TLFW and LVAA…GFLS. Asparagine 79 carries an N-linked (GlcNAc...) asparagine glycan. Transmembrane regions (helical) follow at residues 83–103 and 113–133; these read SLLS…FIFE and IFAF…IAVF.

Part of the tectonic-like complex (also named B9 complex). Interacts with TMEM237, TMEM231, MKS1 and TMEM216.

It localises to the membrane. The protein resides in the cell projection. Its subcellular location is the cilium. Functionally, plays a role in cilia formation and embryonic patterning. Requires for normal Sonic hedgehog (Shh) signaling in the neural tube and acts in combination with GLI2 and GLI3 to pattern ventral and intermediate neuronal cell types. During ciliogenesis regulates the ciliary transition zone localization of some MKS complex proteins. This is Transmembrane protein 107 from Rattus norvegicus (Rat).